Here is a 480-residue protein sequence, read N- to C-terminus: Cysteine--tRNA ligase (480 aa).

Residue Cys27 participates in Zn(2+) binding. A 'HIGH' region motif is present at residues 29–39; that stretch reads PTVYNYAHIGN. Residues Cys221, His246, and Glu250 each coordinate Zn(2+). A 'KMSKS' region motif is present at residues 278–282; the sequence is KMSKS. Lys281 provides a ligand contact to ATP.

It belongs to the class-I aminoacyl-tRNA synthetase family. As to quaternary structure, monomer. It depends on Zn(2+) as a cofactor.

Its subcellular location is the cytoplasm. It carries out the reaction tRNA(Cys) + L-cysteine + ATP = L-cysteinyl-tRNA(Cys) + AMP + diphosphate. The polypeptide is Cysteine--tRNA ligase (Borreliella burgdorferi (strain ZS7) (Borrelia burgdorferi)).